Here is a 77-residue protein sequence, read N- to C-terminus: Acyl carrier protein (77 aa).

The 76-residue stretch at 2 to 77 (ADTLSRITKI…DVVEYIEGRQ (76 aa)) folds into the Carrier domain. Serine 37 is modified (O-(pantetheine 4'-phosphoryl)serine).

It belongs to the acyl carrier protein (ACP) family. In terms of processing, 4'-phosphopantetheine is transferred from CoA to a specific serine of apo-ACP by AcpS. This modification is essential for activity because fatty acids are bound in thioester linkage to the sulfhydryl of the prosthetic group.

Its subcellular location is the cytoplasm. It participates in lipid metabolism; fatty acid biosynthesis. In terms of biological role, carrier of the growing fatty acid chain in fatty acid biosynthesis. The sequence is that of Acyl carrier protein from Halalkalibacterium halodurans (strain ATCC BAA-125 / DSM 18197 / FERM 7344 / JCM 9153 / C-125) (Bacillus halodurans).